The sequence spans 286 residues: Expansin-B4 (286 aa).

An N-terminal signal peptide occupies residues 1–24 (MGSLSSLAAAAVFLSLLAVGHCAA). N28 and N44 each carry an N-linked (GlcNAc...) asparagine glycan. Residues 75–181 (GGACGFKHTN…TRVPCEFPGL (107 aa)) enclose the Expansin-like EG45 domain. 3 disulfide bridges follow: C78-C106, C109-C176, and C114-C120. The region spanning 194 to 281 (VYFAVLVEYE…NWRPNTFYRS (88 aa)) is the Expansin-like CBD domain. N257 is a glycosylation site (N-linked (GlcNAc...) asparagine).

It belongs to the expansin family. Expansin B subfamily. In terms of tissue distribution, expressed in internodes.

It localises to the secreted. It is found in the cell wall. The protein resides in the membrane. Functionally, may cause loosening and extension of plant cell walls by disrupting non-covalent bonding between cellulose microfibrils and matrix glucans. No enzymatic activity has been found. May be required for rapid internodal elongation in deepwater rice during submergence. The sequence is that of Expansin-B4 (EXPB4) from Oryza sativa subsp. japonica (Rice).